A 282-amino-acid chain; its full sequence is Release factor glutamine methyltransferase (282 aa).

S-adenosyl-L-methionine-binding positions include 120 to 124, Asp-143, and Asn-189; that span reads GVGSG. 189–192 is a binding site for substrate; that stretch reads NPPY.

This sequence belongs to the protein N5-glutamine methyltransferase family. PrmC subfamily.

It catalyses the reaction L-glutaminyl-[peptide chain release factor] + S-adenosyl-L-methionine = N(5)-methyl-L-glutaminyl-[peptide chain release factor] + S-adenosyl-L-homocysteine + H(+). Methylates the class 1 translation termination release factors RF1/PrfA and RF2/PrfB on the glutamine residue of the universally conserved GGQ motif. This Dictyoglomus turgidum (strain DSM 6724 / Z-1310) protein is Release factor glutamine methyltransferase.